The chain runs to 63 residues: Large ribosomal subunit protein bL32c (63 aa).

The interval 39–63 is disordered; that stretch reads SFSSGNEHPKPKGFSGQQTNNKIFE. Polar residues predominate over residues 53-63; the sequence is SGQQTNNKIFE.

Belongs to the bacterial ribosomal protein bL32 family.

Its subcellular location is the plastid. The protein resides in the chloroplast. This Triticum aestivum (Wheat) protein is Large ribosomal subunit protein bL32c.